We begin with the raw amino-acid sequence, 492 residues long: Protein adenylyltransferase Fic (492 aa).

Residues 1 to 17 are compositionally biased toward low complexity; that stretch reads MCMEAEPPSPPAQQQEQ. A disordered region spans residues 1-21; sequence MCMEAEPPSPPAQQQEQVNPP. The chain crosses the membrane as a helical span at residues 33–55; it reads LYRLVLLFVAGSLAAWTFHALSS. TPR repeat units follow at residues 118-151 and 152-186; these read ALGALRMAQDLYLAGKDDKAARLFEHALALAPRH and PEVLLRYGEFLEHNQRNIVLADQYYFQALTISPSN. The Inhibitory (S/T)XXXE(G/N) motif signature appears at 243–248; it reads SVGIEG. Residues Glu-247 and 328 to 331 each bind ATP; that span reads VGGH. Residues 297 to 432 form the Fido domain; sequence ITIKDILELH…IRPFVRFIAD (136 aa). The active site involves His-375. ATP-binding positions include 379 to 386, 411 to 412, and Asn-419; these read DGNGRTSR and YY.

This sequence belongs to the fic family. In terms of assembly, homodimer.

It localises to the membrane. The enzyme catalyses L-tyrosyl-[protein] + ATP = O-(5'-adenylyl)-L-tyrosyl-[protein] + diphosphate. The catalysed reaction is L-threonyl-[protein] + ATP = 3-O-(5'-adenylyl)-L-threonyl-[protein] + diphosphate. It carries out the reaction 3-O-(5'-adenylyl)-L-threonyl-[protein] + H2O = L-threonyl-[protein] + AMP + H(+). The side chain of Glu-247 determines which of the two opposing activities (AMPylase or de-AMPylase) will take place. In response to endoplasmic reticulum stress, mediates de-AMPylase activity. Adenylyltransferase activity is inhibited by the inhibitory helix present at the N-terminus: Glu-247 binds ATP and competes with ATP-binding at Arg-386, thereby preventing adenylyltransferase activity. In unstressed cells, disengagement of Glu-247 promotes adenylyltransferase activity. Activation dissociates ATP-binding from Glu-247, allowing ordered binding of the entire ATP moiety with the alpha-phosphate in an orientation that is productive for accepting an incoming target hydroxyl side chain. Functionally, protein that can both mediate the addition of adenosine 5'-monophosphate (AMP) to specific residues of target proteins (AMPylation), and the removal of the same modification from target proteins (de-AMPylation), depending on the context. The side chain of Glu-247 determines which of the two opposing activities (AMPylase or de-AMPylase) will take place. Acts as a key regulator of the unfolded protein response (UPR) by mediating AMPylation or de-AMPylation of Hsc70-3/BiP. In unstressed cells, acts as an adenylyltransferase by mediating AMPylation of Hsc70-3/BiP at 'Thr-518', thereby inactivating it. In response to endoplasmic reticulum stress, acts as a phosphodiesterase by mediating removal of ATP (de-AMPylation) from Hsc70-3/BiP at 'Thr-518', leading to restore HSPA5/BiP activity. The protein is Protein adenylyltransferase Fic of Drosophila simulans (Fruit fly).